Consider the following 31-residue polypeptide: Cytochrome b6-f complex subunit 6 (31 aa).

The helical transmembrane segment at 4–24 threads the bilayer; sequence IISYFLFLIGALTLALVLFIG.

It belongs to the PetL family. As to quaternary structure, the 4 large subunits of the cytochrome b6-f complex are cytochrome b6, subunit IV (17 kDa polypeptide, PetD), cytochrome f and the Rieske protein, while the 4 small subunits are PetG, PetL, PetM and PetN. The complex functions as a dimer.

The protein localises to the plastid. Its subcellular location is the chloroplast thylakoid membrane. Component of the cytochrome b6-f complex, which mediates electron transfer between photosystem II (PSII) and photosystem I (PSI), cyclic electron flow around PSI, and state transitions. PetL is important for photoautotrophic growth as well as for electron transfer efficiency and stability of the cytochrome b6-f complex. This Marchantia polymorpha (Common liverwort) protein is Cytochrome b6-f complex subunit 6.